The primary structure comprises 726 residues: E3 SUMO-protein ligase SIZ2 (726 aa).

In terms of domain architecture, SAP spans 43–77 (MEQLKVLELKQICKSLDLSITGKKAVLQDRIKQFL). One can recognise a PINIT domain in the interval 139–291 (TALPPYSQQQ…SISCFIVEVF (153 aa)). Residues 323–408 (DDDDIITTST…IQNCNEDVEQ (86 aa)) form an SP-RING-type zinc finger. Residues cysteine 354, histidine 356, cysteine 377, and cysteine 380 each coordinate Zn(2+). The interval 507 to 533 (PSESEGSSDYNPNHTSTPKGSPTMDQD) is disordered. Residues 510 to 533 (SEGSSDYNPNHTSTPKGSPTMDQD) show a composition bias toward polar residues.

The protein belongs to the PIAS family. As to quaternary structure, interacts with CDC12. In terms of processing, autosumoylated upon ethanol stress.

It is found in the nucleus. Its pathway is protein modification; protein sumoylation. In terms of biological role, may act as an E3 ligase mediating SUMO/Smt3 attachment to septins. May be involved in chromosome maintenance. The chain is E3 SUMO-protein ligase SIZ2 (NFI1) from Saccharomyces cerevisiae (strain ATCC 204508 / S288c) (Baker's yeast).